Consider the following 254-residue polypeptide: 2,3-bisphosphoglycerate-dependent phosphoglycerate mutase (254 aa).

Substrate contacts are provided by residues 15-22 (RHGQSEWN), 28-29 (TG), arginine 67, 94-97 (ERHY), lysine 105, 121-122 (RR), and 188-189 (GN). The active-site Tele-phosphohistidine intermediate is the histidine 16. Glutamate 94 functions as the Proton donor/acceptor in the catalytic mechanism.

The protein belongs to the phosphoglycerate mutase family. BPG-dependent PGAM subfamily.

The enzyme catalyses (2R)-2-phosphoglycerate = (2R)-3-phosphoglycerate. It functions in the pathway carbohydrate degradation; glycolysis; pyruvate from D-glyceraldehyde 3-phosphate: step 3/5. Functionally, catalyzes the interconversion of 2-phosphoglycerate and 3-phosphoglycerate. This chain is 2,3-bisphosphoglycerate-dependent phosphoglycerate mutase, found in Corynebacterium jeikeium (strain K411).